Reading from the N-terminus, the 242-residue chain is Type III pantothenate kinase (242 aa).

Position 7-14 (7-14) interacts with ATP; it reads DLGNSRFK. Substrate-binding positions include Tyr-91 and 98-101; that span reads GVDR. The active-site Proton acceptor is Asp-100. Thr-121 contacts ATP. Thr-171 contributes to the substrate binding site.

The protein belongs to the type III pantothenate kinase family. Homodimer. Requires NH4(+) as cofactor. The cofactor is K(+).

Its subcellular location is the cytoplasm. The catalysed reaction is (R)-pantothenate + ATP = (R)-4'-phosphopantothenate + ADP + H(+). Its pathway is cofactor biosynthesis; coenzyme A biosynthesis; CoA from (R)-pantothenate: step 1/5. Catalyzes the phosphorylation of pantothenate (Pan), the first step in CoA biosynthesis. The sequence is that of Type III pantothenate kinase from Xanthomonas oryzae pv. oryzae (strain MAFF 311018).